Consider the following 498-residue polypeptide: MRTNPTTSRPGVSTIEEKSTGRIDQIIGPVLDVTFPPGKLPYIYNALVVQSIDTANKQINVTCEVQQLLGNNRVRAVAMSATDGLMRGMEVIDTGAPLSVPVGGATLGRIFNVLGEPVDNLGPVDSSATFPIHRSAPAFIELDTKLSIFETGIKVVDLLAPYRRGGKIGLFGGAGVGKTVLIMELINNIAKAHGGVSVFGGVGERTREGNDLYMEMKESGVINEKNIEESKVALVYGQMNEPPGARMRVGLTALTMAEYFRDVNKQDVLLFIDNIFRFVQAGSEVSALLGRMPSAVGYQPTLSTEMGSLQERIASTKKGSITSIQAVYVPADDLTDPAPATTFAHLDATTVLSRGLASKGIYPAVDPLDSTSTMLQPRIVGNEHYETAQRVKETLQRYKELQDIIAILGLDELSEEDRLTVARARKIERFLSQPFFVAEVFTGSAGKYVGLAETIRGFQLILSGELDGLPEQAFYLVGNIDEASTKAITLEEENKSKK.

Residue 172 to 179 participates in ATP binding; the sequence is GGAGVGKT.

It belongs to the ATPase alpha/beta chains family. In terms of assembly, F-type ATPases have 2 components, CF(1) - the catalytic core - and CF(0) - the membrane proton channel. CF(1) has five subunits: alpha(3), beta(3), gamma(1), delta(1), epsilon(1). CF(0) has four main subunits: a(1), b(1), b'(1) and c(9-12).

The protein localises to the plastid. Its subcellular location is the chloroplast thylakoid membrane. It catalyses the reaction ATP + H2O + 4 H(+)(in) = ADP + phosphate + 5 H(+)(out). Functionally, produces ATP from ADP in the presence of a proton gradient across the membrane. The catalytic sites are hosted primarily by the beta subunits. This is ATP synthase subunit beta, chloroplastic from Lolium perenne (Perennial ryegrass).